The chain runs to 426 residues: Actin-like protein 6B (426 aa).

The segment at 39-82 is essential for mediating its function in dendritic development; may contribute to neuronal-specific targeting; sequence TTVGLLAAEEGGGLELEGDKEKKGKIFHIDTNALHVPRDGAEVM.

The protein belongs to the actin family. Component of the multiprotein chromatin-remodeling complexes SWI/SNF: SWI/SNF-A (BAF), SWI/SNF-B (PBAF) and related complexes. The canonical complex contains a catalytic subunit (either SMARCA4/BRG1/BAF190A or SMARCA2/BRM/BAF190B) and at least SMARCE1, ACTL6A/BAF53, SMARCC1/BAF155, SMARCC2/BAF170 and SMARCB1/SNF5/BAF47. Other subunits specific to each of the complexes may also be present permitting several possible combinations developmentally and tissue specific. Component of the BAF complex, which includes at least actin (ACTB), ARID1A/BAF250A, ARID1B/BAF250B, SMARCA2/BRM, SMARCA4/BRG1/BAF190A, ACTL6A/BAF53, ACTL6B/BAF53B, SMARCE1/BAF57, SMARCC1/BAF155, SMARCC2/BAF170, SMARCB1/SNF5/INI1 and one or more SMARCD1/BAF60A, SMARCD2/BAF60B, or SMARCD3/BAF60C. Component of neuron-specific chromatin remodeling complex (nBAF complex) composed of at least, ARID1A/BAF250A or ARID1B/BAF250B, SMARCD1/BAF60A or SMARCD2/BAF60B or SMARCD3/BAF60C, SMARCA2/BRM/BAF190B, SMARCA4/BRG1/BAF190A, SMARCB1/BAF47, SMARCC1/BAF155, SMARCE1/BAF57, SMARCC2/BAF170, DPF1/BAF45B, DPF3/BAF45C, ACTL6B/BAF53B and actin (ACTB). Note that the nBAF complex is polymorphic in regard to the ATPase, SMARCA2 and SMARCA4 occupying mutually exclusive positions. May be a component of the SWI/SNF-B (PBAF) chromatin remodeling complex, at least composed of SMARCA4/BRG1, SMARCB1/BAF47/SNF5, ACTL6A/BAF53A or ACTL6B/BAF53B, SMARCE1/BAF57, SMARCD1/BAF60A, SMARCD2/BAF60B, perhaps SMARCD3/BAF60C, SMARCC1/BAF155, SMARCC2/BAF170, PBRM1/BAF180, ARID2/BAF200 and actin.

Its subcellular location is the nucleus. In terms of biological role, involved in transcriptional activation and repression of select genes by chromatin remodeling (alteration of DNA-nucleosome topology). Component of SWI/SNF chromatin remodeling complexes that carry out key enzymatic activities, changing chromatin structure by altering DNA-histone contacts within a nucleosome in an ATP-dependent manner. Belongs to the neuron-specific chromatin remodeling complex (nBAF complex), as such plays a role in remodeling mononucleosomes in an ATP-dependent fashion, and is required for postmitotic neural development and dendritic outgrowth. During neural development a switch from a stem/progenitor to a postmitotic chromatin remodeling mechanism occurs as neurons exit the cell cycle and become committed to their adult state. The transition from proliferating neural stem/progenitor cells to postmitotic neurons requires a switch in subunit composition of the npBAF and nBAF complexes. As neural progenitors exit mitosis and differentiate into neurons, npBAF complexes which contain ACTL6A/BAF53A and PHF10/BAF45A, are exchanged for homologous alternative ACTL6B/BAF53B and DPF1/BAF45B or DPF3/BAF45C subunits in neuron-specific complexes (nBAF). The npBAF complex is essential for the self-renewal/proliferative capacity of the multipotent neural stem cells. The nBAF complex along with CREST plays a role regulating the activity of genes essential for dendrite growth. ACTL6B/BAF53B is not essential for assembly of the nBAF complex but is required for targeting the complex and CREST to the promoter of genes essential for dendritic growth. Essential for neuronal maturation and dendrite development. The chain is Actin-like protein 6B from Homo sapiens (Human).